Consider the following 274-residue polypeptide: SWI/SNF chromatin-remodeling complex subunit snf30 (274 aa).

Polar residues-rich tracts occupy residues 123 to 150 and 157 to 167; these read TLSY…GTMQ and PSLTRSDSVSS. The segment at 123 to 167 is disordered; it reads TLSYPPSNGDSSSYANGTDLHGNTGTMQQEEKANPSLTRSDSVSS.

As to quaternary structure, component of the SWI/SNF global transcription activator complex composed of at least arp9, arp42, snf5, snf22, snf30, sbf59, sol1, ssr1, ssr2, ssr3, ssr4 and tfg3.

The protein resides in the cytoplasm. The protein localises to the nucleus. Functionally, component of the SWI/SNF complex, an ATP-dependent chromatin remodeling complex, required for the positive and negative regulation of gene expression of a large number of genes. It changes chromatin structure by altering DNA-histone contacts within a nucleosome, leading eventually to a change in nucleosome position, thus facilitating or repressing binding of gene-specific transcription factors. The sequence is that of SWI/SNF chromatin-remodeling complex subunit snf30 (snf30) from Schizosaccharomyces pombe (strain 972 / ATCC 24843) (Fission yeast).